A 98-amino-acid chain; its full sequence is Small ribosomal subunit protein bTHXm (98 aa).

A mitochondrion-targeting transit peptide spans 1–35 (MAAMQWCGAMTRRIMMTQRTSAALNCSARYSSLSP). Residues 52-71 (DKKTKKGKRFKGSYGNSRGK) are disordered. The segment covering 53 to 62 (KKTKKGKRFK) has biased composition (basic residues).

The protein belongs to the bacterial ribosomal protein bTHX family. As to quaternary structure, component of the mitochondrial ribosome small subunit.

It localises to the mitochondrion. The polypeptide is Small ribosomal subunit protein bTHXm (Arabidopsis thaliana (Mouse-ear cress)).